The chain runs to 115 residues: DNA-binding protein PH1060 (115 aa).

This sequence belongs to the PDCD5 family.

The polypeptide is DNA-binding protein PH1060 (Pyrococcus horikoshii (strain ATCC 700860 / DSM 12428 / JCM 9974 / NBRC 100139 / OT-3)).